Reading from the N-terminus, the 98-residue chain is NADH-ubiquinone oxidoreductase chain 4L (98 aa).

Transmembrane regions (helical) follow at residues 2–22 (PSIS…MLVF), 29–49 (SLLC…LFIM), and 61–81 (ILLL…LVMV).

Belongs to the complex I subunit 4L family. Core subunit of respiratory chain NADH dehydrogenase (Complex I) which is composed of 45 different subunits.

It is found in the mitochondrion inner membrane. It carries out the reaction a ubiquinone + NADH + 5 H(+)(in) = a ubiquinol + NAD(+) + 4 H(+)(out). Functionally, core subunit of the mitochondrial membrane respiratory chain NADH dehydrogenase (Complex I) which catalyzes electron transfer from NADH through the respiratory chain, using ubiquinone as an electron acceptor. Part of the enzyme membrane arm which is embedded in the lipid bilayer and involved in proton translocation. This is NADH-ubiquinone oxidoreductase chain 4L (MT-ND4L) from Lepilemur mitsinjoensis (Mitsinjo sportive lemur).